We begin with the raw amino-acid sequence, 159 residues long: NADH-quinone oxidoreductase subunit I (159 aa).

4Fe-4S ferredoxin-type domains lie at 51-80 and 90-119; these read RRYE…IEAD and TRYD…EGPN. Residues C60, C63, C66, C70, C99, C102, C105, and C109 each contribute to the [4Fe-4S] cluster site.

It belongs to the complex I 23 kDa subunit family. As to quaternary structure, NDH-1 is composed of 14 different subunits. Subunits NuoA, H, J, K, L, M, N constitute the membrane sector of the complex. It depends on [4Fe-4S] cluster as a cofactor.

It localises to the cell inner membrane. It carries out the reaction a quinone + NADH + 5 H(+)(in) = a quinol + NAD(+) + 4 H(+)(out). Its function is as follows. NDH-1 shuttles electrons from NADH, via FMN and iron-sulfur (Fe-S) centers, to quinones in the respiratory chain. The immediate electron acceptor for the enzyme in this species is believed to be ubiquinone. Couples the redox reaction to proton translocation (for every two electrons transferred, four hydrogen ions are translocated across the cytoplasmic membrane), and thus conserves the redox energy in a proton gradient. The sequence is that of NADH-quinone oxidoreductase subunit I from Rickettsia massiliae (strain Mtu5).